The following is a 137-amino-acid chain: Cytochrome c2 (137 aa).

A signal peptide spans 1 to 21 (MKISLTAATVAALVLAAPAFA). Heme c-binding residues include C34, C37, H38, and M117.

The protein belongs to the cytochrome c family. Binds 1 heme c group covalently per subunit.

In terms of biological role, cytochrome c2 is found mainly in purple, non-sulfur, photosynthetic bacteria where it functions as the electron donor to the oxidized bacteriochlorophyll in the photophosphorylation pathway. However, it may also have a role in the respiratory chain and is found in some non-photosynthetic bacteria. In Rhodobacter capsulatus (strain ATCC BAA-309 / NBRC 16581 / SB1003), this protein is Cytochrome c2 (cycA).